The sequence spans 439 residues: N5-carboxyaminoimidazole ribonucleotide synthase (439 aa).

ATP is bound by residues Lys113, Lys160, 197–200, Glu205, and 283–284; these read EERV and NE. Residues 117-313 enclose the ATP-grasp domain; it reads RRRLAALGAA…QFEQHLRAVL (197 aa).

Belongs to the PurK/PurT family. In terms of assembly, homodimer.

It carries out the reaction 5-amino-1-(5-phospho-beta-D-ribosyl)imidazole + hydrogencarbonate + ATP = 5-carboxyamino-1-(5-phospho-D-ribosyl)imidazole + ADP + phosphate + 2 H(+). It participates in purine metabolism; IMP biosynthesis via de novo pathway; 5-amino-1-(5-phospho-D-ribosyl)imidazole-4-carboxylate from 5-amino-1-(5-phospho-D-ribosyl)imidazole (N5-CAIR route): step 1/2. Its function is as follows. Catalyzes the ATP-dependent conversion of 5-aminoimidazole ribonucleotide (AIR) and HCO(3)(-) to N5-carboxyaminoimidazole ribonucleotide (N5-CAIR). The polypeptide is N5-carboxyaminoimidazole ribonucleotide synthase (Mycobacterium leprae (strain TN)).